The following is a 1388-amino-acid chain: Peroxisomal ATPase PEX6 (1388 aa).

Disordered stretches follow at residues 1–29, 169–192, 262–287, 302–323, and 346–365; these read MTTSELVPPPPARRSPRTRRRRQDKPALS, EGTFFRDRPNKGKGKAPAQPDTPE, RGQSAPAIPPNRSLNGVPEDDEDDTA, DAATTEMDTVTETEESDLSGVD, and TTASGVSTMQPGTPMTIGRG. Residues 14–23 are compositionally biased toward basic residues; the sequence is RSPRTRRRRQ. The segment covering 169-178 has biased composition (basic and acidic residues); sequence EGTFFRDRPN. Acidic residues predominate over residues 310-323; it reads TVTETEESDLSGVD. Residues 346-358 are compositionally biased toward polar residues; the sequence is TTASGVSTMQPGT. 1034-1041 serves as a coordination point for ATP; the sequence is GPPGTGKT. The interval 1297-1388 is disordered; sequence GPPEKDRQQQ…GTASDDEGLY (92 aa). Over residues 1319–1332 the composition is skewed to low complexity; sequence VSGSSVVSKGKGKA.

It belongs to the AAA ATPase family. Interacts with PEX1; forming the PEX1-PEX6 AAA ATPase complex, which is composed of a heterohexamer formed by a trimer of PEX1-PEX6 dimers.

Its subcellular location is the cytoplasm. The protein localises to the cytosol. It localises to the peroxisome membrane. The enzyme catalyses ATP + H2O = ADP + phosphate + H(+). Its function is as follows. Component of the PEX1-PEX6 AAA ATPase complex, a protein dislocase complex that mediates the ATP-dependent extraction of the PEX5 receptor from peroxisomal membranes, an essential step for PEX5 recycling. Specifically recognizes PEX5 monoubiquitinated at 'Cys-6', and pulls it out of the peroxisome lumen through the PEX2-PEX10-PEX12 retrotranslocation channel. Extraction by the PEX1-PEX6 AAA ATPase complex is accompanied by unfolding of the TPR repeats and release of bound cargo from PEX5. The sequence is that of Peroxisomal ATPase PEX6 (PEX6) from Colletotrichum orbiculare (strain 104-T / ATCC 96160 / CBS 514.97 / LARS 414 / MAFF 240422) (Cucumber anthracnose fungus).